The sequence spans 891 residues: Alanine--tRNA ligase (891 aa).

Positions 564, 568, 677, and 681 each coordinate Zn(2+).

It belongs to the class-II aminoacyl-tRNA synthetase family. The cofactor is Zn(2+).

It is found in the cytoplasm. It catalyses the reaction tRNA(Ala) + L-alanine + ATP = L-alanyl-tRNA(Ala) + AMP + diphosphate. Functionally, catalyzes the attachment of alanine to tRNA(Ala) in a two-step reaction: alanine is first activated by ATP to form Ala-AMP and then transferred to the acceptor end of tRNA(Ala). Also edits incorrectly charged Ser-tRNA(Ala) and Gly-tRNA(Ala) via its editing domain. The protein is Alanine--tRNA ligase of Bradyrhizobium sp. (strain ORS 278).